Reading from the N-terminus, the 93-residue chain is Parbolysin P4 (93 aa).

Intrachain disulfides connect Cys-16-Cys-37, Cys-22-Cys-33, and Cys-47-Cys-60.

It belongs to the worm cytolysin family. As to expression, localized within the skin and proboscis and are most readily isolated from body mucus secretions.

Its subcellular location is the secreted. Functionally, cytolysin that shows hemolytic activity (on bovine erythrocytes, HC(50)=5.75 mg/ml). This hemolytic activity is completely inhibited by small unilamelar vesicles composed of PC/PG, PC/PI and PC/PS in 1:1 molar ratios (with at least 100 mg/ml concentration). In Parborlasia corrugatus (Antarctic nemertean worm), this protein is Parbolysin P4.